The chain runs to 97 residues: YcgL domain-containing protein PSPPH_1548 (97 aa).

The region spanning 3-87 is the YcgL domain; that stretch reads RICSIYRSPK…AEDDYIEHLP (85 aa).

This is YcgL domain-containing protein PSPPH_1548 from Pseudomonas savastanoi pv. phaseolicola (strain 1448A / Race 6) (Pseudomonas syringae pv. phaseolicola (strain 1448A / Race 6)).